Consider the following 32-residue polypeptide: U3-cyrtautoxin-As1a (32 aa).

3 cysteine pairs are disulfide-bonded: Cys-4/Cys-19, Cys-11/Cys-24, and Cys-18/Cys-29.

Belongs to the neurotoxin 14 (magi-1) family. This sequence to aptotoxin III. As to expression, expressed by the venom gland.

Its subcellular location is the secreted. Its function is as follows. Is both paralytic and lethal, when injected into lepidopteran larvae. Is a slower acting toxin, being lethal at 24 hours, but not paralytic at 1 hour post-injection. The sequence is that of U3-cyrtautoxin-As1a from Apomastus schlingeri (Trap-door spider).